The chain runs to 127 residues: D-ribose pyranase (127 aa).

The active-site Proton donor is H20. Residues D28, H94, and 116-118 (YSN) contribute to the substrate site.

This sequence belongs to the RbsD / FucU family. RbsD subfamily. As to quaternary structure, homodecamer.

It localises to the cytoplasm. It carries out the reaction beta-D-ribopyranose = beta-D-ribofuranose. It functions in the pathway carbohydrate metabolism; D-ribose degradation; D-ribose 5-phosphate from beta-D-ribopyranose: step 1/2. In terms of biological role, catalyzes the interconversion of beta-pyran and beta-furan forms of D-ribose. This is D-ribose pyranase from Cutibacterium acnes (strain DSM 16379 / KPA171202) (Propionibacterium acnes).